Reading from the N-terminus, the 743-residue chain is 1,4-alpha-glucan branching enzyme GlgB 2 (743 aa).

The segment at 1-23 (MSERQGGQEQRTEADGMTTEGIS) is disordered. Asp422 (nucleophile) is an active-site residue. Catalysis depends on Glu475, which acts as the Proton donor.

Belongs to the glycosyl hydrolase 13 family. GlgB subfamily. As to quaternary structure, monomer.

The catalysed reaction is Transfers a segment of a (1-&gt;4)-alpha-D-glucan chain to a primary hydroxy group in a similar glucan chain.. The protein operates within glycan biosynthesis; glycogen biosynthesis. Its function is as follows. Catalyzes the formation of the alpha-1,6-glucosidic linkages in glycogen by scission of a 1,4-alpha-linked oligosaccharide from growing alpha-1,4-glucan chains and the subsequent attachment of the oligosaccharide to the alpha-1,6 position. The sequence is that of 1,4-alpha-glucan branching enzyme GlgB 2 from Xanthomonas euvesicatoria pv. vesicatoria (strain 85-10) (Xanthomonas campestris pv. vesicatoria).